The following is a 499-amino-acid chain: Maturase K (499 aa).

The protein belongs to the intron maturase 2 family. MatK subfamily.

The protein resides in the plastid. Its subcellular location is the chloroplast. In terms of biological role, usually encoded in the trnK tRNA gene intron. Probably assists in splicing its own and other chloroplast group II introns. The polypeptide is Maturase K (Macrozamia communis (Burrawang palm)).